Consider the following 412-residue polypeptide: Phytoene synthase, chloroplastic (412 aa).

It belongs to the phytoene/squalene synthase family. In terms of assembly, monomer. Expressed in roots, leaves, flower buds, sepals, petals, lips and lip crests.

It is found in the plastid. The protein resides in the chloroplast. The enzyme catalyses 2 (2E,6E,10E)-geranylgeranyl diphosphate = 15-cis-phytoene + 2 diphosphate. Its pathway is carotenoid biosynthesis; phytoene biosynthesis; all-trans-phytoene from geranylgeranyl diphosphate: step 1/1. In terms of biological role, catalyzes the reaction from prephytoene diphosphate to phytoene. This is Phytoene synthase, chloroplastic (PSY) from Oncidium hybrid cultivar (Orchid).